The chain runs to 622 residues: Probable ATP-dependent RNA helicase DDX41 (622 aa).

Positions 1 to 15 (MEDSEPERKRARADE) are enriched in basic and acidic residues. 2 disordered regions span residues 1-39 (MEDSEPERKRARADEATAGGSRSEDEDEDDEDYVPYVPL) and 51-84 (LQRRRKGATEEEQQDSGSEPRGDEDDIPLGPQSN). Phosphoserine is present on Ser4. The residue at position 9 (Lys9) is an N6-acetyllysine. A Glycyl lysine isopeptide (Lys-Gly) (interchain with G-Cter in ubiquitin) cross-link involves residue Lys9. Residues Ser21 and Ser23 each carry the phosphoserine modification. Residues 24–33 (EDEDEDDEDY) are compositionally biased toward acidic residues. Tyr33 carries the phosphotyrosine modification. Lys115 is covalently cross-linked (Glycyl lysine isopeptide (Lys-Gly) (interchain with G-Cter in ubiquitin)). The Q motif signature appears at 181 to 209 (KSFKEMKFPAAILRGLKKKGILHPTPIQI). The Helicase ATP-binding domain occupies 212–396 (IPTILSGRDM…KSALVKPVTI (185 aa)). Residue 225–232 (AFTGSGKT) coordinates ATP. The DEAD box motif lies at 344-347 (DEAD). Residues 407–567 (DVIQEVEYVK…KVPPVLQVLH (161 aa)) enclose the Helicase C-terminal domain. Tyr414 carries the phosphotyrosine modification. Residues Lys416 and Lys442 each participate in a glycyl lysine isopeptide (Lys-Gly) (interchain with G-Cter in SUMO2) cross-link. A CCHC-type zinc finger spans residues 580 to 597 (RGCAFCGGLGHRITDCPK).

This sequence belongs to the DEAD box helicase family. DDX41 subfamily. In terms of assembly, identified in the spliceosome C complex. Interacts with ERCC6. Interacts with FAM50A. Interacts with STING1. Interacts with CGAS. Interacts with several spliceosomes components such as PRP19 or CDC5L. Acetylation at Lys-9 regulates the nuclear/cytoplasmic localization. In terms of processing, phosphorylated by BTK; phosphorylation induces binding to dsDNA and STING1. Post-translationally, 'Lys-48'-linked ubiquitinated and degraded by TRIM21 leading to negative regulation of the innate immune response to intracellular dsDNA.

The protein resides in the nucleus. Its subcellular location is the cytoplasm. It carries out the reaction ATP + H2O = ADP + phosphate + H(+). Multifunctional protein that participates in many aspects of cellular RNA metabolism. Plays pivotal roles in innate immune sensing and hematopoietic homeostasis. Recognizes foreign or self-nucleic acids generated during microbial infection, thereby initiating anti-pathogen responses. Mechanistically, phosphorylation by BTK allows binding to dsDNA leading to interaction with STING1. Modulates the homeostasis of dsDNA through its ATP-dependent DNA-unwinding activity and ATP-independent strand-annealing activity. In turn, induces STING1-mediated type I interferon and cytokine responses to DNA and DNA viruses. During murine leukemia virus infection, primarily senses the DNA/RNA hybrid generated at the first step of reverse transcription, while cGAS recognizes dsDNA generated at the next step and both are needed for the antiretroviral innate immune response. Selectively modulates the transcription of certain immunity-associated genes by regulating their alternative splicing. Binds to RNA (R)-loops, structures consisting of DNA/RNA hybrids and a displaced strand of DNA that occur during transcription, and prevents their accumulation, thereby maintaining genome stability. Also participates in pre-mRNA splicing, translational regulation and snoRNA processing, which is essential for ribosome biogenesis. The sequence is that of Probable ATP-dependent RNA helicase DDX41 (Ddx41) from Mus musculus (Mouse).